Here is a 309-residue protein sequence, read N- to C-terminus: MSDQVSLGVVGIGKIARDQHLPAIDAEPGFKLTACASRHAEVTGVRNYRDLRALLAAERELDAVSLCAPPQVRYAQARAALEAGKHVMLEKPPGATLGEVAVLEALARERGLTLFATWHSRCASAVEPAREWLATRAIRAVQVRWKEDVRRWHPGQQWIWEPGGLGVFDPGINALSIVTRILPRELVLREATLIVPSDVQTPIAAELDCADTDGVPVRAEFDWRHGPVEQWEIAVDTADGVLAISRGGAQLSIAGEPVELGPEREYPALYAHFHALIARGESDVDVRPLRLVADAFLFGRRVQTDAFGR.

NADP(+)-binding positions include I15 and S37–R38. Residue K91 is the Proton donor of the active site. Position 169 (D169) interacts with NADP(+).

It belongs to the Gfo/Idh/MocA family. Monomer.

It carries out the reaction alpha-L-arabinopyanose + NAD(+) = L-arabinono-1,4-lactone + NADH + H(+). The catalysed reaction is alpha-L-arabinopyanose + NADP(+) = L-arabinono-1,4-lactone + NADPH + H(+). The enzyme catalyses D-galactose + NAD(+) = D-galactono-1,4-lactone + NADH + H(+). It catalyses the reaction D-galactose + NADP(+) = D-galactono-1,5-lactone + NADPH + H(+). It functions in the pathway carbohydrate degradation; L-arabinose degradation via L-arabinono-1,4-lactone pathway. Functionally, catalyzes the NAD(P)(+)-dependent conversion of L-arabinose to L-arabino-gamma-lactone. Is involved in a degradation pathway of L-arabinose that allows A.brasilense to grow on L-arabinose as a sole carbon source. Prefers NADP(+) to NAD(+) as electron acceptor. Displays high catalytic efficiency for both L-arabinose and D-galactose in vitro. However, the enzyme appears to be involved in the metabolism of L-arabinose but not D-galactose in vivo. To a lesser extent, is also active on D-talose and D-xylose as substrates in vitro, but not with D-arabinose, D-glucose, D-ribose, L-xylose, L-mannose, L-lyxose, and D-fructose. This chain is L-arabinose 1-dehydrogenase (NAD(P)(+)) (araA), found in Azospirillum brasilense.